Reading from the N-terminus, the 549-residue chain is Glucose-6-phosphate isomerase (549 aa).

The active-site Proton donor is Glu353. Catalysis depends on residues His384 and Lys513.

The protein belongs to the GPI family.

It is found in the cytoplasm. The enzyme catalyses alpha-D-glucose 6-phosphate = beta-D-fructose 6-phosphate. It functions in the pathway carbohydrate biosynthesis; gluconeogenesis. It participates in carbohydrate degradation; glycolysis; D-glyceraldehyde 3-phosphate and glycerone phosphate from D-glucose: step 2/4. Catalyzes the reversible isomerization of glucose-6-phosphate to fructose-6-phosphate. In Brucella suis (strain ATCC 23445 / NCTC 10510), this protein is Glucose-6-phosphate isomerase.